A 1162-amino-acid polypeptide reads, in one-letter code: Carbamoyl phosphate synthase large chain (1162 aa).

The segment at 1 to 456 (MPKRTDIKSI…SLQKALRGLE (456 aa)) is carboxyphosphate synthetic domain. Positions 129, 222, 228, 229, 261, 263, 268, 294, 295, 296, 338, and 352 each coordinate ATP. The 196-residue stretch at 186-381 (ETEWQLGEVE…IAKVAAKLAV (196 aa)) folds into the ATP-grasp 1 domain. Mg(2+)-binding residues include Gln-338, Glu-352, and Asn-354. The Mn(2+) site is built by Gln-338, Glu-352, and Asn-354. The oligomerization domain stretch occupies residues 457-613 (TGLTGFDEIA…PFVGQPRSEA (157 aa)). Residues 614–1025 (EVSDRKKVVI…AFAKAQLGAG (412 aa)) are carbamoyl phosphate synthetic domain. Residues 742-954 (QKLLIKLDLN…IAKVAARIMA (213 aa)) enclose the ATP-grasp 2 domain. Residues Arg-778, Thr-838, Leu-840, Glu-845, Gly-870, Ile-871, His-872, Ser-873, Gln-913, and Glu-925 each contribute to the ATP site. Gln-913, Glu-925, and Asn-927 together coordinate Mg(2+). 3 residues coordinate Mn(2+): Gln-913, Glu-925, and Asn-927. The region spanning 1026-1162 (VELPREGTVF…VRPLQDYFRS (137 aa)) is the MGS-like domain. An allosteric domain region spans residues 1026-1162 (VELPREGTVF…VRPLQDYFRS (137 aa)).

Belongs to the CarB family. In terms of assembly, composed of two chains; the small (or glutamine) chain promotes the hydrolysis of glutamine to ammonia, which is used by the large (or ammonia) chain to synthesize carbamoyl phosphate. Tetramer of heterodimers (alpha,beta)4. The cofactor is Mg(2+). Mn(2+) is required as a cofactor.

It carries out the reaction hydrogencarbonate + L-glutamine + 2 ATP + H2O = carbamoyl phosphate + L-glutamate + 2 ADP + phosphate + 2 H(+). The enzyme catalyses hydrogencarbonate + NH4(+) + 2 ATP = carbamoyl phosphate + 2 ADP + phosphate + 2 H(+). Its pathway is amino-acid biosynthesis; L-arginine biosynthesis; carbamoyl phosphate from bicarbonate: step 1/1. The protein operates within pyrimidine metabolism; UMP biosynthesis via de novo pathway; (S)-dihydroorotate from bicarbonate: step 1/3. Large subunit of the glutamine-dependent carbamoyl phosphate synthetase (CPSase). CPSase catalyzes the formation of carbamoyl phosphate from the ammonia moiety of glutamine, carbonate, and phosphate donated by ATP, constituting the first step of 2 biosynthetic pathways, one leading to arginine and/or urea and the other to pyrimidine nucleotides. The large subunit (synthetase) binds the substrates ammonia (free or transferred from glutamine from the small subunit), hydrogencarbonate and ATP and carries out an ATP-coupled ligase reaction, activating hydrogencarbonate by forming carboxy phosphate which reacts with ammonia to form carbamoyl phosphate. The chain is Carbamoyl phosphate synthase large chain from Brucella suis biovar 1 (strain 1330).